Reading from the N-terminus, the 397-residue chain is Protein irld-34 (397 aa).

In Caenorhabditis elegans, this protein is Protein irld-34.